Here is a 300-residue protein sequence, read N- to C-terminus: 4-hydroxy-tetrahydrodipicolinate synthase (300 aa).

Threonine 57 is a binding site for pyruvate. Tyrosine 145 functions as the Proton donor/acceptor in the catalytic mechanism. The active-site Schiff-base intermediate with substrate is lysine 173. Isoleucine 213 serves as a coordination point for pyruvate.

This sequence belongs to the DapA family. In terms of assembly, homotetramer; dimer of dimers.

It is found in the cytoplasm. The catalysed reaction is L-aspartate 4-semialdehyde + pyruvate = (2S,4S)-4-hydroxy-2,3,4,5-tetrahydrodipicolinate + H2O + H(+). It participates in amino-acid biosynthesis; L-lysine biosynthesis via DAP pathway; (S)-tetrahydrodipicolinate from L-aspartate: step 3/4. Functionally, catalyzes the condensation of (S)-aspartate-beta-semialdehyde [(S)-ASA] and pyruvate to 4-hydroxy-tetrahydrodipicolinate (HTPA). The sequence is that of 4-hydroxy-tetrahydrodipicolinate synthase from Corynebacterium jeikeium (strain K411).